Reading from the N-terminus, the 137-residue chain is MVKASANKSRRKVVTGLQVGSYVKVTDNSGAKVAMIIGVPGYHGRLRRIPPAGVGDMVVVTVKKGTPEMRHQVVRAIVVRQRKPFRRPDGTWVAFEDNAVVIVSEDGTPRGSEIRGPVAREAVERWPRIGNVASIVV.

Belongs to the universal ribosomal protein uL14 family. As to quaternary structure, part of the 50S ribosomal subunit. Forms a cluster with proteins L3 and L24e, part of which may contact the 16S rRNA in 2 intersubunit bridges.

Functionally, binds to 23S rRNA. Forms part of two intersubunit bridges in the 70S ribosome. This Ignicoccus hospitalis (strain KIN4/I / DSM 18386 / JCM 14125) protein is Large ribosomal subunit protein uL14.